We begin with the raw amino-acid sequence, 321 residues long: Histidine N-alpha-methyltransferase (321 aa).

Position 56 (Tyr-56) interacts with L-histidine. Residues Gly-86, Lys-92, Asp-113, and 141–142 (DF) each bind S-adenosyl-L-methionine. L-histidine-binding positions include Asn-166, Tyr-206, and 282–284 (EVS).

This sequence belongs to the methyltransferase superfamily. EgtD family. In terms of assembly, monomer.

The catalysed reaction is L-histidine + 3 S-adenosyl-L-methionine = hercynine + 3 S-adenosyl-L-homocysteine + 3 H(+). Its pathway is amino-acid biosynthesis; ergothioneine biosynthesis. Functionally, catalyzes the SAM-dependent triple methylation of the alpha-amino group of histidine to form hercynine, a step in the biosynthesis pathway of ergothioneine. Among all the proteinogenic amino acids, only L-histidine is a substrate. The chain is Histidine N-alpha-methyltransferase from Mycolicibacterium smegmatis (strain ATCC 700084 / mc(2)155) (Mycobacterium smegmatis).